The primary structure comprises 723 residues: Catalase-peroxidase (723 aa).

A cross-link (tryptophyl-tyrosyl-methioninium (Trp-Tyr) (with M-252)) is located at residues 98–226 (WHSAGSYRVG…LAAVMMGLIY (129 aa)). Residue H99 is the Proton acceptor of the active site. A cross-link (tryptophyl-tyrosyl-methioninium (Tyr-Met) (with W-98)) is located at residues 226–252 (YVNPEGVDGNPDPLKTAKDMRVTFARM). H267 is a heme b binding site.

This sequence belongs to the peroxidase family. Peroxidase/catalase subfamily. As to quaternary structure, homodimer or homotetramer. Requires heme b as cofactor. In terms of processing, formation of the three residue Trp-Tyr-Met cross-link is important for the catalase, but not the peroxidase activity of the enzyme.

The catalysed reaction is H2O2 + AH2 = A + 2 H2O. It carries out the reaction 2 H2O2 = O2 + 2 H2O. Functionally, bifunctional enzyme with both catalase and broad-spectrum peroxidase activity. In Vibrio vulnificus (strain YJ016), this protein is Catalase-peroxidase.